The chain runs to 409 residues: MIPGNRMLMVVLLCQVLLGGASHASLIPETGKKKVAEIQGHAGGRRSGQSHELLRDFEATLLQMFGLRRRPQPSKSAVIPDYMRDLYRLQSGEEEEEEQIRSIDLEYPERPTSRANTVRSFHHEEHLEDIPGTSENSAFRFFFNLSSIPENEVISSAELRLFREQVDQGPDWEQGFHRINIYEVMKPPAEVVPGHLITRLLDTRLVHHNVTRWETFDVSPAVLRWTREKQPNYGLAIEVTHLHQTRTHQGQHVRISRSLPQGNGDWAQLRPLLVTFGHDGRGHALTRRRRAKRSPKHHPQRARKKNKNCRRHSLYVDFSDVGWNDWIVAPPGYQAFYCHGDCPFPLADHLNSTNHAIVQTLVNSVNSSIPKACCVPTELSAISMLYLDEYDKVVLKNYQEMVVEGCGCR.

An N-terminal signal peptide occupies residues 1–19; that stretch reads MIPGNRMLMVVLLCQVLLG. Positions 20-293 are excised as a propeptide; it reads GASHASLIPE…ALTRRRRAKR (274 aa). The residue at position 91 (serine 91) is a Phosphoserine. Asparagine 144 and asparagine 209 each carry an N-linked (GlcNAc...) asparagine glycan. The segment at 284–308 is disordered; that stretch reads ALTRRRRAKRSPKHHPQRARKKNKN. Cystine bridges form between cysteine 309/cysteine 374, cysteine 338/cysteine 406, and cysteine 342/cysteine 408. N-linked (GlcNAc...) asparagine glycans are attached at residues asparagine 351 and asparagine 366.

Belongs to the TGF-beta family. Homodimer; disulfide-linked. Interacts with GREM2. Part of a complex consisting of TWSG1 and CHRD. Interacts with the serine proteases, HTRA1 and HTRA3; the interaction with either inhibits BMP4-mediated signaling. The HTRA protease activity is required for this inhibition. Interacts with SOSTDC1. Interacts with FBN1 (via N-terminal domain) and FBN2. Interacts with type I receptor BMPR1A. Interacts with type II receptor BMPR2. Interacts with FSTL1; this interaction inhibits the activation of the BMP4/Smad1/5/8 signaling pathway. Interacts with TGFBR3.

Its subcellular location is the secreted. The protein resides in the extracellular space. It localises to the extracellular matrix. Functionally, growth factor of the TGF-beta superfamily that plays essential roles in many developmental processes, including neurogenesis, vascular development, angiogenesis and osteogenesis. Acts in concert with PTHLH/PTHRP to stimulate ductal outgrowth during embryonic mammary development and to inhibit hair follicle induction. Initiates the canonical BMP signaling cascade by associating with type I receptor BMPR1A and type II receptor BMPR2. Once all three components are bound together in a complex at the cell surface, BMPR2 phosphorylates and activates BMPR1A. In turn, BMPR1A propagates signal by phosphorylating SMAD1/5/8 that travel to the nucleus and act as activators and repressors of transcription of target genes. Positively regulates the expression of odontogenic development regulator MSX1 via inducing the IPO7-mediated import of SMAD1 to the nucleus. Required for MSX1-mediated mesenchymal molar tooth bud development beyond the bud stage, via promoting Wnt signaling. Acts as a positive regulator of odontoblast differentiation during mesenchymal tooth germ formation, expression is repressed during the bell stage by MSX1-mediated inhibition of CTNNB1 signaling. Able to induce its own expression in dental mesenchymal cells and also in the neighboring dental epithelial cells via an MSX1-mediated pathway. Can also signal through non-canonical BMP pathways such as ERK/MAP kinase, PI3K/Akt, or SRC cascades. For example, induces SRC phosphorylation which, in turn, activates VEGFR2, leading to an angiogenic response. The protein is Bone morphogenetic protein 4 of Suncus murinus (Asian house shrew).